A 243-amino-acid chain; its full sequence is Probable phosphatase CBO3379/CLC_3322 (243 aa).

The Zn(2+) site is built by histidine 8, histidine 10, histidine 16, histidine 41, glutamate 74, histidine 102, histidine 132, aspartate 192, and histidine 194.

Belongs to the PHP family. Requires Zn(2+) as cofactor.

This is Probable phosphatase CBO3379/CLC_3322 from Clostridium botulinum (strain Hall / ATCC 3502 / NCTC 13319 / Type A).